A 527-amino-acid chain; its full sequence is MSLCGARANAKMMAAYNGGTSAAAAGHHHHHHHHLPHLPPPHLHHHHHPQHHLHPGSAAAVHPVQQHTSSAAAAAAAAAAAAAMLNPGQQQPYFPSPAPGQAPGPAAAAPAQVQAAAAATVKAHHHQHSHHPQQQLDIEPDRPIGYGAFGVVWSVTDPRDGKRVALKKMPNVFQNLVSCKRVFRELKMLCFFKHDNVLSALDILQPPHIDYFEEIYVVTELMQSDLHKIIVSPQPLSSDHVKVFLYQILRGLKYLHSAGILHRDIKPGNLLVNSNCVLKICDFGLARVEELDESRHMTQEVVTQYYRAPEILMGSRHYSNAIDIWSVGCIFAELLGRRILFQAQSPIQQLDLITDLLGTPSLEAMRTACEGAKAHILRGPHKQPSLPVLYTLSSQATHEAVHLLCRMLVFDPSKRISAKDALAHPYLDEGRLRYHTCMCKCCFSTSTGRVYTSDFEPITNPKFDDTFEKNLSSVRQVKEIIHQFILEQQKGNRVPLCINPQSAAFKSFISSTVAQPSEMPPSPLVWE.

Sufficient for interaction with DAPK3 stretches follow at residues 1–125 (MSLC…KAHH) and 124–416 (HHHQ…SKRI). Required for interaction with TAB2 regions lie at residues 1–304 (MSLC…VVTQ) and 434–527 (YHTC…LVWE). Disordered stretches follow at residues 22–72 (AAAA…SSAA) and 90–140 (QQPY…DIEP). Basic residues predominate over residues 26–54 (GHHHHHHHHLPHLPPPHLHHHHHPQHHLH). Residues 103-119 (PGPAAAAPAQVQAAAAA) show a composition bias toward low complexity. Basic residues predominate over residues 122 to 131 (KAHHHQHSHH). The Protein kinase domain occupies 138–427 (IEPDRPIGYG…AKDALAHPYL (290 aa)). Residues 144 to 152 (IGYGAFGVV) and Lys167 each bind ATP. Catalysis depends on Asp264, which acts as the Proton acceptor. Thr298 is subject to Phosphothreonine; by autocatalysis. The short motif at 298-300 (TQE) is the TQE element. Residues 428 to 527 (DEGRLRYHTC…EMPPSPLVWE (100 aa)) are required for homodimerization and kinase activation and localization to the nucleus. Ser522 carries the phosphoserine modification.

The protein belongs to the protein kinase superfamily. CMGC Ser/Thr protein kinase family. MAP kinase subfamily. Homodimer. Homodimerization is required for intermolecular autophosphorylation, kinase activation and nuclear localization. May interact with components of cullin-RING-based SCF (SKP1-CUL1-F-box protein) E3 ubiquitin-protein ligase complexes. Interacts with LEF1, MEF2A, MYBL1 and MYBL2. Interacts with the upstream activating kinases HIPK2 and MAP3K7/TAK1. Interaction with MAP3K7/TAK1 seems to be indirect, and may be mediated by other proteins such as STAT3, TAB1 and TAB2. Interacts with and phosphorylates a number of transcription factors including FOXO1, FOXO3, FOXO4, MYB, NOTCH1 and TCF7L2/TCF4. Interacts with DAPK3/ZIPK, and this interaction may disrupt interaction with transcription factors such as TCF7L2/TCF4. Forms a transcriptional repressor complex with CHD7, PPARG and SETDB1. Interacts with RNF138/NARF. Interacts with ATF5; the interaction stabilizes ATF5 at the protein level in a kinase-independent manner. Mg(2+) is required as a cofactor. In terms of processing, phosphorylated on Thr-298. Intermolecular autophosphorylation on Thr-298 activates the enzyme.

It is found in the nucleus. The protein localises to the cytoplasm. The enzyme catalyses L-seryl-[protein] + ATP = O-phospho-L-seryl-[protein] + ADP + H(+). It carries out the reaction L-threonyl-[protein] + ATP = O-phospho-L-threonyl-[protein] + ADP + H(+). Its activity is regulated as follows. Activated by the non-canonical Wnt signaling pathway, in which WNT5A leads to activation of MAP3K7/TAK1 and HIPK2, which subsequently phosphorylates and activates this protein. Activated by dimerization and subsequent intermolecular autophosphorylation on Thr-298. Other cytokines such as IL6 may also activate this regulatory circuit. Its function is as follows. Serine/threonine-protein kinase that regulates a number of transcription factors with key roles in cell fate determination. Positive effector of the non-canonical Wnt signaling pathway, acting downstream of WNT5A, MAP3K7/TAK1 and HIPK2. Negative regulator of the canonical Wnt/beta-catenin signaling pathway. Binds to and phosphorylates TCF7L2/TCF4 and LEF1, promoting the dissociation of the TCF7L2/LEF1/beta-catenin complex from DNA, as well as the ubiquitination and subsequent proteolysis of LEF1. Together these effects inhibit the transcriptional activation of canonical Wnt/beta-catenin target genes. Negative regulator of the Notch signaling pathway. Binds to and phosphorylates NOTCH1, thereby preventing the formation of a transcriptionally active ternary complex of NOTCH1, RBPJ/RBPSUH and MAML1. Negative regulator of the MYB family of transcription factors. Phosphorylation of MYB leads to its subsequent proteolysis while phosphorylation of MYBL1 and MYBL2 inhibits their interaction with the coactivator CREBBP. Other transcription factors may also be inhibited by direct phosphorylation of CREBBP itself. Acts downstream of IL6 and MAP3K7/TAK1 to phosphorylate STAT3, which is in turn required for activation of NLK by MAP3K7/TAK1. Upon IL1B stimulus, cooperates with ATF5 to activate the transactivation activity of C/EBP subfamily members. Phosphorylates ATF5 but also stabilizes ATF5 protein levels in a kinase-independent manner. Acts as an inhibitor of the mTORC1 complex in response to osmotic stress by mediating phosphorylation of RPTOR, thereby preventing recruitment of the mTORC1 complex to lysosomes. This chain is Serine/threonine-protein kinase NLK (NLK), found in Canis lupus familiaris (Dog).